A 674-amino-acid polypeptide reads, in one-letter code: Sodium/myo-inositol cotransporter 2 (674 aa).

Residues Met-1–Gly-27 are Extracellular-facing. Residues Asp-28–Val-48 traverse the membrane as a helical segment. The Cytoplasmic portion of the chain corresponds to Lys-49–Lys-56. The helical transmembrane segment at Gly-57 to Ser-77 threads the bilayer. At Asn-78 to Glu-102 the chain is on the extracellular side. A helical membrane pass occupies residues Phe-103–Gly-123. At Gln-124–Arg-140 the chain is on the cytoplasmic side. Residues Ile-141–Asp-161 form a helical membrane-spanning segment. At Met-162–Ser-180 the chain is on the extracellular side. A helical transmembrane segment spans residues Val-181–Ile-201. Residues Tyr-202–Thr-208 lie on the Cytoplasmic side of the membrane. The chain crosses the membrane as a helical span at residues Leu-209–Met-229. The Extracellular portion of the chain corresponds to Glu-230 to Pro-272. A helical transmembrane segment spans residues Gly-273–Val-293. Residues Gln-294–Gly-308 lie on the Cytoplasmic side of the membrane. Residues Ser-309–Val-329 form a helical membrane-spanning segment. Topologically, residues Ser-330–Gly-375 are extracellular. A helical transmembrane segment spans residues Leu-376–Ala-396. Residues Ser-397 to Met-418 lie on the Cytoplasmic side of the membrane. Residues Ile-419–Val-439 form a helical membrane-spanning segment. At Gln-440–Gln-446 the chain is on the extracellular side. A helical transmembrane segment spans residues Leu-447–Val-467. The Cytoplasmic portion of the chain corresponds to Leu-468–Gly-479. A helical membrane pass occupies residues Ala-480 to Ile-500. The Extracellular segment spans residues Tyr-501–Tyr-521. Residues Leu-522–Leu-542 form a helical membrane-spanning segment. Over Thr-543–Thr-653 the chain is Cytoplasmic. A helical membrane pass occupies residues Leu-654–Ala-674.

The protein belongs to the sodium:solute symporter (SSF) (TC 2.A.21) family. In terms of tissue distribution, expressed in brain, lung and kidney. In the kidney, strongly expressed in the cortex, at the luminal side of proximal convoluted tubules and in BBMVs. Weaker expression observed in the medulla (at protein level).

The protein resides in the membrane. It is found in the apical cell membrane. The enzyme catalyses myo-inositol(out) + 2 Na(+)(out) = myo-inositol(in) + 2 Na(+)(in). It carries out the reaction 1D-chiro-inositol(out) + 2 Na(+)(out) = 1D-chiro-inositol(in) + 2 Na(+)(in). The catalysed reaction is D-glucose(out) + 2 Na(+)(out) = D-glucose(in) + 2 Na(+)(in). It catalyses the reaction D-xylose(out) + 2 Na(+)(out) = D-xylose(in) + 2 Na(+)(in). With respect to regulation, MI transport activity stimulated five-fold under 24 hour hypertonic shock conditions. MI inward currents were gradually inhibited as increasing amounts of phlorizin were added to the superfusion medium. When sodium is replaced by potassium, MI uptake is dramatically reduced and in the presence of L-fucose or D-chiro-inositol (DCI), the specific accumulation of tracer amounts of MI is also reduced. Its function is as follows. Involved in the sodium-dependent cotransport of myo-inositol (MI) with a Na(+):MI stoichiometry of 2:1. Exclusively responsible for apical MI transport and absorption in intestine. Can also transport D-chiro-inositol (DCI) but not L-fucose. Exhibits stereospecific cotransport of both D-glucose and D-xylose. May induce apoptosis through the TNF-alpha, PDCD1 pathway. May play a role in the regulation of MI concentration in serum, involving reabsorption in at least the proximal tubule of the kidney. The polypeptide is Sodium/myo-inositol cotransporter 2 (Oryctolagus cuniculus (Rabbit)).